A 281-amino-acid polypeptide reads, in one-letter code: Arylamine N-acetyltransferase (281 aa).

Catalysis depends on Cys-69, which acts as the Acyl-thioester intermediate. Active-site residues include His-107 and Asp-122. 2 positions are modified to N6-acetyllysine: Lys-214 and Lys-281.

Belongs to the arylamine N-acetyltransferase family. In terms of assembly, homodimer. In terms of processing, acetylated on Lys-214 and Lys-281. Deacetylated by CobB.

It localises to the cytoplasm. It carries out the reaction an arylamine + acetyl-CoA = an N-acetylarylamine + CoA. It catalyses the reaction an N-hydroxyarylamine + acetyl-CoA = an N-acetoxyarylamine + CoA. With respect to regulation, inhibited by salicylic acid, acetylsalicylic acid, 2,6-dichrolo-4-nitrophenol, N-ethylmaleimide and iodoacetamide. Its function is as follows. Catalyzes the acetyl-CoA-dependent N-acetylation of aromatic amines, and, probably, the O-acetylation of N-hydroxyarylamines. In vitro, catalyzes the N-acetylation of various arylamines such as aminobenzoic acid, aminophenol, aminotoluene, phenetidine, anisidine, aniline, isoniazid and 2-amino-fluorene. N-hydroxyarylamine O-acetyltransferase activity has not been assayed directly, however, NhoA activity is required for the mutagenicity of nitroaromatic compounds, suggesting that it also has O-acetyltransferase activity. In Escherichia coli (strain K12), this protein is Arylamine N-acetyltransferase (nhoA).